The primary structure comprises 413 residues: FAD-dependent monooxygenase vrtH (413 aa).

Residues 1-23 (MQRANHTRPVLIIGAGLSGLAIG) form the signal peptide. N-linked (GlcNAc...) asparagine glycosylation occurs at Asn-5. 2 residues coordinate FAD: Glu-37 and Ala-48. Asn-94 carries an N-linked (GlcNAc...) asparagine glycan. Arg-120 is an FAD binding site. Residue Asn-232 is glycosylated (N-linked (GlcNAc...) asparagine). Positions 327 and 340 each coordinate FAD.

Belongs to the paxM FAD-dependent monooxygenase family. The cofactor is FAD.

It participates in secondary metabolite biosynthesis; terpenoid biosynthesis. FAD-dependent monooxygenase; part of the gene cluster that mediates the biosynthesis of viridicatumtoxin, a tetracycline-like fungal meroterpenoid with a unique, fused spirobicyclic ring system. The first step of the pathway is the production of the malonamoyl-CoA starter unit for the polyketide synthase vrtA. The aldolase vrtJ may be involved in the synthesis of the malonamate substrate for malonamoyl-CoA synthetase vrtB. The polyketide synthase vrtA then may utilize the malonamoyl-CoA starter unit, followed by sequential condensation of eight malonyl-CoA units to form the polyketide backbone. The cyclization of the last ring could be mediated by the lactamase-like protein vrtG. The proposed post-PKS tailoring steps are a hydroxylation at C5 catalyzed the cytochrome P450 monooxygenase vrtE, a hydroxylation at C12a catalyzed by VrtH and/or VrtI, and an O-methylation by the O-methyltransferase vrtF. VrtC is then proposed to catalyze the transfer of a geranyl group synthesized by vrtD to the aromatic C ring of the tetracyclic polyketide intermediate of viridicatumtoxin to yield previridicatumtoxin. Finally, the cytochrome P450 monooxygenase vrtK catalyzes the spirocyclization of the geranyl moiety of previridicatumtoxin to afford viridicatumtoxin. This is FAD-dependent monooxygenase vrtH from Penicillium aethiopicum.